The chain runs to 513 residues: ATP synthase subunit alpha (513 aa).

169–176 contributes to the ATP binding site; that stretch reads GDRQIGKT.

It belongs to the ATPase alpha/beta chains family. As to quaternary structure, F-type ATPases have 2 components, CF(1) - the catalytic core - and CF(0) - the membrane proton channel. CF(1) has five subunits: alpha(3), beta(3), gamma(1), delta(1), epsilon(1). CF(0) has three main subunits: a(1), b(2) and c(9-12). The alpha and beta chains form an alternating ring which encloses part of the gamma chain. CF(1) is attached to CF(0) by a central stalk formed by the gamma and epsilon chains, while a peripheral stalk is formed by the delta and b chains.

It localises to the cell inner membrane. The catalysed reaction is ATP + H2O + 4 H(+)(in) = ADP + phosphate + 5 H(+)(out). Functionally, produces ATP from ADP in the presence of a proton gradient across the membrane. The alpha chain is a regulatory subunit. This Francisella tularensis subsp. novicida (strain U112) protein is ATP synthase subunit alpha.